Here is a 409-residue protein sequence, read N- to C-terminus: Peptidase T (409 aa).

Histidine 78 provides a ligand contact to Zn(2+). The active site involves aspartate 80. Aspartate 140 contacts Zn(2+). Catalysis depends on glutamate 173, which acts as the Proton acceptor. Glutamate 174, aspartate 196, and histidine 379 together coordinate Zn(2+).

Belongs to the peptidase M20B family. Zn(2+) is required as a cofactor.

The protein localises to the cytoplasm. The catalysed reaction is Release of the N-terminal residue from a tripeptide.. In terms of biological role, cleaves the N-terminal amino acid of tripeptides. This chain is Peptidase T, found in Salmonella choleraesuis (strain SC-B67).